The sequence spans 282 residues: Bis(5'-nucleosyl)-tetraphosphatase, symmetrical (282 aa).

The protein belongs to the Ap4A hydrolase family.

It carries out the reaction P(1),P(4)-bis(5'-adenosyl) tetraphosphate + H2O = 2 ADP + 2 H(+). Its function is as follows. Hydrolyzes diadenosine 5',5'''-P1,P4-tetraphosphate to yield ADP. This chain is Bis(5'-nucleosyl)-tetraphosphatase, symmetrical, found in Shigella dysenteriae serotype 1 (strain Sd197).